The following is a 512-amino-acid chain: Ribose import ATP-binding protein RbsA 2 (512 aa).

2 consecutive ABC transporter domains span residues L7 to E242 and L257 to G498. G39–S46 contributes to the ATP binding site.

The protein belongs to the ABC transporter superfamily. Ribose importer (TC 3.A.1.2.1) family. The complex is composed of an ATP-binding protein (RbsA), two transmembrane proteins (RbsC) and a solute-binding protein (RbsB).

The protein resides in the cell inner membrane. The enzyme catalyses D-ribose(out) + ATP + H2O = D-ribose(in) + ADP + phosphate + H(+). Functionally, part of the ABC transporter complex RbsABC involved in ribose import. Responsible for energy coupling to the transport system. This is Ribose import ATP-binding protein RbsA 2 from Rhizobium meliloti (strain 1021) (Ensifer meliloti).